Reading from the N-terminus, the 385-residue chain is Chorismate synthase (385 aa).

The segment at 43–63 (PDLDRRRPGTSRHVTQRNEPD) is disordered. NADP(+)-binding residues include R48 and R54. FMN is bound by residues 125–127 (RSS), 238–239 (NA), G278, 293–297 (KPTSS), and R319. Positions 363–372 (AQAPRTETAP) are enriched in low complexity. A disordered region spans residues 363 to 385 (AQAPRTETAPATPPLDAGDDIEA).

The protein belongs to the chorismate synthase family. Homotetramer. The cofactor is FMNH2.

The catalysed reaction is 5-O-(1-carboxyvinyl)-3-phosphoshikimate = chorismate + phosphate. It functions in the pathway metabolic intermediate biosynthesis; chorismate biosynthesis; chorismate from D-erythrose 4-phosphate and phosphoenolpyruvate: step 7/7. In terms of biological role, catalyzes the anti-1,4-elimination of the C-3 phosphate and the C-6 proR hydrogen from 5-enolpyruvylshikimate-3-phosphate (EPSP) to yield chorismate, which is the branch point compound that serves as the starting substrate for the three terminal pathways of aromatic amino acid biosynthesis. This reaction introduces a second double bond into the aromatic ring system. The sequence is that of Chorismate synthase from Leptothrix cholodnii (strain ATCC 51168 / LMG 8142 / SP-6) (Leptothrix discophora (strain SP-6)).